Here is a 73-residue protein sequence, read N- to C-terminus: Potassium channel toxin alpha-KTx 27.1 (73 aa).

Residues 1–23 (MKFLFLTLFVCCFIAVLVIPSEA) form the signal peptide.

The protein belongs to the short scorpion toxin superfamily. Potassium channel inhibitor family. Alpha-KTx 27 subfamily. Contains 4 disulfide bonds. As to expression, expressed by the venom gland.

Its subcellular location is the secreted. This is Potassium channel toxin alpha-KTx 27.1 from Buthus israelis (Israeli scorpion).